The chain runs to 167 residues: NADH-quinone oxidoreductase subunit B (167 aa).

Residues Cys-40, Cys-41, Cys-105, and Cys-134 each contribute to the [4Fe-4S] cluster site.

Belongs to the complex I 20 kDa subunit family. As to quaternary structure, NDH-1 is composed of 14 different subunits. Subunits NuoB, C, D, E, F, and G constitute the peripheral sector of the complex. [4Fe-4S] cluster serves as cofactor.

The protein localises to the cell inner membrane. It carries out the reaction a quinone + NADH + 5 H(+)(in) = a quinol + NAD(+) + 4 H(+)(out). Functionally, NDH-1 shuttles electrons from NADH, via FMN and iron-sulfur (Fe-S) centers, to quinones in the respiratory chain. The immediate electron acceptor for the enzyme in this species is believed to be ubiquinone. Couples the redox reaction to proton translocation (for every two electrons transferred, four hydrogen ions are translocated across the cytoplasmic membrane), and thus conserves the redox energy in a proton gradient. The polypeptide is NADH-quinone oxidoreductase subunit B (Campylobacter jejuni (strain RM1221)).